The primary structure comprises 134 residues: DNA polymerase III subunit psi (134 aa).

The protein belongs to the DNA polymerase III psi/HolD chain family. In terms of assembly, DNA polymerase III contains a core (composed of alpha, epsilon and theta chains) that associates with a tau subunit. This core dimerizes to form the POLIII' complex. PolIII' associates with the gamma complex (composed of gamma, delta, delta', psi and chi chains) and with the beta chain to form the complete DNA polymerase III complex. Interacts directly with the chi subunit (holC).

It carries out the reaction DNA(n) + a 2'-deoxyribonucleoside 5'-triphosphate = DNA(n+1) + diphosphate. Its function is as follows. Part of the beta sliding clamp loading complex, which hydrolyzes ATP to load the beta clamp onto primed DNA to form the DNA replication pre-initiation complex. DNA polymerase III is a complex, multichain enzyme responsible for most of the replicative synthesis in bacteria. This DNA polymerase also exhibits 3' to 5' exonuclease activity. This Haemophilus influenzae (strain ATCC 51907 / DSM 11121 / KW20 / Rd) protein is DNA polymerase III subunit psi (holD).